Here is a 208-residue protein sequence, read N- to C-terminus: Pyridoxal 5'-phosphate synthase subunit PdxT (208 aa).

Position 46 to 48 (46 to 48 (GES)) interacts with L-glutamine. Cys78 (nucleophile) is an active-site residue. L-glutamine contacts are provided by residues Arg105 and 156-157 (IR). Active-site charge relay system residues include His192 and Glu194.

Belongs to the glutaminase PdxT/SNO family. In the presence of PdxS, forms a dodecamer of heterodimers. Only shows activity in the heterodimer.

It carries out the reaction aldehydo-D-ribose 5-phosphate + D-glyceraldehyde 3-phosphate + L-glutamine = pyridoxal 5'-phosphate + L-glutamate + phosphate + 3 H2O + H(+). The enzyme catalyses L-glutamine + H2O = L-glutamate + NH4(+). It participates in cofactor biosynthesis; pyridoxal 5'-phosphate biosynthesis. In terms of biological role, catalyzes the hydrolysis of glutamine to glutamate and ammonia as part of the biosynthesis of pyridoxal 5'-phosphate. The resulting ammonia molecule is channeled to the active site of PdxS. This Bifidobacterium adolescentis (strain ATCC 15703 / DSM 20083 / NCTC 11814 / E194a) protein is Pyridoxal 5'-phosphate synthase subunit PdxT.